A 348-amino-acid chain; its full sequence is uncharacterized protein (348 aa).

The segment at 132 to 348 is disordered; that stretch reads SECRRSSDAL…QGTRRDSARL (217 aa). Over residues 161–178 the composition is skewed to low complexity; the sequence is STAPIPNAAISSARSSAR. A compositionally biased stretch (polar residues) spans 192–207; that stretch reads SRSSSETRSPGGTVQP. The span at 227 to 273 shows a compositional bias: low complexity; it reads AAGSLLPAPRPPASSASSPQAAAPAAPSATRLPRRTTPSAPRPSSRP. The span at 274–287 shows a compositional bias: pro residues; sequence ARPPIPAARPPPRR. The segment covering 288–310 has biased composition (low complexity); sequence TPGTPRPAAARARAPAGCSPARR.

This is an uncharacterized protein from Streptomyces fradiae (Streptomyces roseoflavus).